We begin with the raw amino-acid sequence, 134 residues long: Endoribonuclease YbeY (134 aa).

Zn(2+)-binding residues include H94, H98, and H104.

The protein belongs to the endoribonuclease YbeY family. Zn(2+) serves as cofactor.

It is found in the cytoplasm. Single strand-specific metallo-endoribonuclease involved in late-stage 70S ribosome quality control and in maturation of the 3' terminus of the 16S rRNA. The protein is Endoribonuclease YbeY of Campylobacter jejuni subsp. jejuni serotype O:23/36 (strain 81-176).